Reading from the N-terminus, the 186-residue chain is Ribosome-recycling factor (186 aa).

Belongs to the RRF family.

It is found in the cytoplasm. Responsible for the release of ribosomes from messenger RNA at the termination of protein biosynthesis. May increase the efficiency of translation by recycling ribosomes from one round of translation to another. In Ralstonia nicotianae (strain ATCC BAA-1114 / GMI1000) (Ralstonia solanacearum), this protein is Ribosome-recycling factor.